Consider the following 412-residue polypeptide: Serine hydroxymethyltransferase (412 aa).

(6S)-5,6,7,8-tetrahydrofolate is bound by residues Leu-117 and 121–123; that span reads GHL. Position 226 is an N6-(pyridoxal phosphate)lysine (Lys-226). A (6S)-5,6,7,8-tetrahydrofolate-binding site is contributed by 349 to 351; that stretch reads SPF.

The protein belongs to the SHMT family. Homodimer. It depends on pyridoxal 5'-phosphate as a cofactor.

It is found in the cytoplasm. The enzyme catalyses (6R)-5,10-methylene-5,6,7,8-tetrahydrofolate + glycine + H2O = (6S)-5,6,7,8-tetrahydrofolate + L-serine. It participates in one-carbon metabolism; tetrahydrofolate interconversion. The protein operates within amino-acid biosynthesis; glycine biosynthesis; glycine from L-serine: step 1/1. Functionally, catalyzes the reversible interconversion of serine and glycine with tetrahydrofolate (THF) serving as the one-carbon carrier. This reaction serves as the major source of one-carbon groups required for the biosynthesis of purines, thymidylate, methionine, and other important biomolecules. Also exhibits THF-independent aldolase activity toward beta-hydroxyamino acids, producing glycine and aldehydes, via a retro-aldol mechanism. This Nitratidesulfovibrio vulgaris (strain ATCC 29579 / DSM 644 / CCUG 34227 / NCIMB 8303 / VKM B-1760 / Hildenborough) (Desulfovibrio vulgaris) protein is Serine hydroxymethyltransferase.